The sequence spans 573 residues: Proline--tRNA ligase (573 aa).

Belongs to the class-II aminoacyl-tRNA synthetase family. ProS type 1 subfamily. As to quaternary structure, homodimer.

It localises to the cytoplasm. It catalyses the reaction tRNA(Pro) + L-proline + ATP = L-prolyl-tRNA(Pro) + AMP + diphosphate. Its function is as follows. Catalyzes the attachment of proline to tRNA(Pro) in a two-step reaction: proline is first activated by ATP to form Pro-AMP and then transferred to the acceptor end of tRNA(Pro). As ProRS can inadvertently accommodate and process non-cognate amino acids such as alanine and cysteine, to avoid such errors it has two additional distinct editing activities against alanine. One activity is designated as 'pretransfer' editing and involves the tRNA(Pro)-independent hydrolysis of activated Ala-AMP. The other activity is designated 'posttransfer' editing and involves deacylation of mischarged Ala-tRNA(Pro). The misacylated Cys-tRNA(Pro) is not edited by ProRS. This Methylobacillus flagellatus (strain ATCC 51484 / DSM 6875 / VKM B-1610 / KT) protein is Proline--tRNA ligase.